The chain runs to 631 residues: Dolichyl-diphosphooligosaccharide--protein glycosyltransferase subunit 2 (631 aa).

The N-terminal stretch at 1-22 is a signal peptide; it reads MAPPGSSAVFLLALTITASTQA. The Lumenal segment spans residues 23-540; the sequence is LTPTHYLTKH…REPEKRPPTV (518 aa). N-linked (GlcNAc...) asparagine glycosylation occurs at N106. A Glycyl lysine isopeptide (Lys-Gly) (interchain with G-Cter in ubiquitin) cross-link involves residue K154. Residues 541–561 form a helical membrane-spanning segment; the sequence is VSNTFTALILSPLLLLFALWI. Topologically, residues 562–571 are cytoplasmic; it reads RIGANVSNFT. The chain crosses the membrane as a helical span at residues 572-592; that stretch reads FAPSTVIFHLGHAAMLGLMYV. Topologically, residues 593–596 are lumenal; that stretch reads YWTQ. Residues 597-617 traverse the membrane as a helical segment; that stretch reads LNMFQTLKYLAVLGTVTFLAG. Over 618–631 the chain is Cytoplasmic; sequence NRMLAQQAVKRTAH.

The protein belongs to the SWP1 family. In terms of assembly, component of the oligosaccharyltransferase (OST) complex. OST exists in two different complex forms which contain common core subunits RPN1, RPN2, OST48, OST4, DAD1 and TMEM258, either STT3A or STT3B as catalytic subunits, and form-specific accessory subunits. STT3A complex assembly occurs through the formation of 3 subcomplexes. Subcomplex 1 contains RPN1 and TMEM258, subcomplex 2 contains the STT3A-specific subunits STT3A, DC2/OSTC, and KCP2 as well as the core subunit OST4, and subcomplex 3 contains RPN2, DAD1, and OST48. The STT3A complex can form stable complexes with the Sec61 complex or with both the Sec61 and TRAP complexes. Interacts with DDI2. Interacts with TMEM35A/NACHO.

It is found in the endoplasmic reticulum. It localises to the endoplasmic reticulum membrane. It participates in protein modification; protein glycosylation. Its function is as follows. Subunit of the oligosaccharyl transferase (OST) complex that catalyzes the initial transfer of a defined glycan (Glc(3)Man(9)GlcNAc(2) in eukaryotes) from the lipid carrier dolichol-pyrophosphate to an asparagine residue within an Asn-X-Ser/Thr consensus motif in nascent polypeptide chains, the first step in protein N-glycosylation. N-glycosylation occurs cotranslationally and the complex associates with the Sec61 complex at the channel-forming translocon complex that mediates protein translocation across the endoplasmic reticulum (ER). All subunits are required for a maximal enzyme activity. The polypeptide is Dolichyl-diphosphooligosaccharide--protein glycosyltransferase subunit 2 (Rattus norvegicus (Rat)).